The primary structure comprises 205 residues: Glycerol-3-phosphate acyltransferase (205 aa).

5 helical membrane passes run 13–33 (LLALAALIGYLLGSIPFGLIL), 68–88 (LLLDALKGTAAVLVANALWGY), 90–110 (ASLVAGFFAFLGHLFPVWLGF), 120–140 (IGVLLGAAPLMMLAFALIWLA), and 147–167 (YSSLSALLAMLIIPVALWVLG).

Belongs to the PlsY family. As to quaternary structure, probably interacts with PlsX.

It is found in the cell inner membrane. It carries out the reaction an acyl phosphate + sn-glycerol 3-phosphate = a 1-acyl-sn-glycero-3-phosphate + phosphate. It participates in lipid metabolism; phospholipid metabolism. Its function is as follows. Catalyzes the transfer of an acyl group from acyl-phosphate (acyl-PO(4)) to glycerol-3-phosphate (G3P) to form lysophosphatidic acid (LPA). This enzyme utilizes acyl-phosphate as fatty acyl donor, but not acyl-CoA or acyl-ACP. This Agrobacterium fabrum (strain C58 / ATCC 33970) (Agrobacterium tumefaciens (strain C58)) protein is Glycerol-3-phosphate acyltransferase.